Here is a 661-residue protein sequence, read N- to C-terminus: Threonine--tRNA ligase (661 aa).

The TGS domain maps to 1–64; the sequence is MSHSVSLTFP…ADGKIEIVTR (64 aa). A catalytic region spans residues 245-547; it reads DHRRLGREMD…LLENYAGHMP (303 aa). Zn(2+)-binding residues include cysteine 341, histidine 392, and histidine 524.

It belongs to the class-II aminoacyl-tRNA synthetase family. In terms of assembly, homodimer. The cofactor is Zn(2+).

It localises to the cytoplasm. The enzyme catalyses tRNA(Thr) + L-threonine + ATP = L-threonyl-tRNA(Thr) + AMP + diphosphate + H(+). Catalyzes the attachment of threonine to tRNA(Thr) in a two-step reaction: L-threonine is first activated by ATP to form Thr-AMP and then transferred to the acceptor end of tRNA(Thr). Also edits incorrectly charged L-seryl-tRNA(Thr). In Sinorhizobium fredii (strain NBRC 101917 / NGR234), this protein is Threonine--tRNA ligase.